The sequence spans 232 residues: Large ribosomal subunit protein uL1 (232 aa).

The protein belongs to the universal ribosomal protein uL1 family. As to quaternary structure, part of the 50S ribosomal subunit.

Binds directly to 23S rRNA. The L1 stalk is quite mobile in the ribosome, and is involved in E site tRNA release. In terms of biological role, protein L1 is also a translational repressor protein, it controls the translation of the L11 operon by binding to its mRNA. This Ruegeria pomeroyi (strain ATCC 700808 / DSM 15171 / DSS-3) (Silicibacter pomeroyi) protein is Large ribosomal subunit protein uL1.